The chain runs to 396 residues: Elongation factor Tu (396 aa).

A tr-type G domain is found at 10-205; that stretch reads KTHANIGTIG…AVDEYIPTPE (196 aa). Residues 19 to 26 form a G1 region; the sequence is GHVDHGKT. 19–26 provides a ligand contact to GTP; the sequence is GHVDHGKT. Threonine 26 is a binding site for Mg(2+). The interval 61-65 is G2; the sequence is GITIS. Positions 82-85 are G3; the sequence is DCPG. GTP-binding positions include 82–86 and 137–140; these read DCPGH and NKCD. The tract at residues 137-140 is G4; it reads NKCD. The G5 stretch occupies residues 175-177; the sequence is SAL.

Belongs to the TRAFAC class translation factor GTPase superfamily. Classic translation factor GTPase family. EF-Tu/EF-1A subfamily. As to quaternary structure, monomer.

The protein resides in the cytoplasm. It carries out the reaction GTP + H2O = GDP + phosphate + H(+). Its function is as follows. GTP hydrolase that promotes the GTP-dependent binding of aminoacyl-tRNA to the A-site of ribosomes during protein biosynthesis. This chain is Elongation factor Tu, found in Shouchella clausii (strain KSM-K16) (Alkalihalobacillus clausii).